The chain runs to 71 residues: Brevinin-1V (71 aa).

The first 22 residues, 1-22 (MFTLKKSLLLLFFLGTINLSLC), serve as a signal peptide directing secretion. Residues 23–45 (EQERDADEEERRDDSEERDIEVE) constitute a propeptide that is removed on maturation. A disulfide bridge links cysteine 65 with cysteine 71.

It belongs to the frog skin active peptide (FSAP) family. Brevinin subfamily. Expressed by the skin glands.

The protein resides in the secreted. Has antimicrobial activity against Gram-positive bacteria and fungi but has weak or no activity against a range of Gram-negative bacteria except P.faecalis. Active against the Gram-positive bacteria E.faecium 091299 (MIC=37.5 uM), S.aureus ATCC 25923 (MIC=2.4 uM), S.carnosus KHS (MIC=19 uM), B.licheniformis X39 (MIC=2.4 uM) and R.rhodochrous X15 (MIC=1.2 uM) and a lower activity against E.faecalis 981 (MIC=75 uM). Active against the Gram-negative bacterium P.faecalis X29 (MIC=9.5 uM) is virtually inactive against E.coli ATCC 25922 (MIC=150 uM), and inactive against P.aeruginosa and S.typhi. Has antifungal activity against C.albicans ATCC 2002 (MIC=9.5 uM) and is also active against the slime mold 090223 (MIC=1.2 uM). Has low hemolytic activity against human erythrocytes (LC(50)=75 uM). This chain is Brevinin-1V, found in Odorrana hainanensis (Odor frog).